Here is a 768-residue protein sequence, read N- to C-terminus: Calcium up-regulated protein G (768 aa).

The disordered stretch occupies residues 1–22; that stretch reads MINIEDISKSSNQSEEKQLKST. Ricin B-type lectin domains follow at residues 1 to 107 and 100 to 248; these read MINI…WTID and KTQI…WGIN.

Belongs to the cup family.

Its subcellular location is the cytoplasm. It is found in the membrane. Functionally, may play an important role in stabilizing and/or regulating the cell membrane during Ca(2+) stress or certain stages of development. This chain is Calcium up-regulated protein G (cupG), found in Dictyostelium discoideum (Social amoeba).